We begin with the raw amino-acid sequence, 240 residues long: Sugar fermentation stimulation protein homolog (240 aa).

This sequence belongs to the SfsA family.

This is Sugar fermentation stimulation protein homolog from Natranaerobius thermophilus (strain ATCC BAA-1301 / DSM 18059 / JW/NM-WN-LF).